The chain runs to 426 residues: UPF0229 protein YeaH (426 aa).

A compositionally biased stretch (basic and acidic residues) spans 78–92 (GNDHFIQNDRIERPQ). A disordered region spans residues 78–108 (GNDHFIQNDRIERPQDGGGSGSGNGQASQDG).

This sequence belongs to the UPF0229 family.

The protein is UPF0229 protein YeaH of Salmonella arizonae (strain ATCC BAA-731 / CDC346-86 / RSK2980).